A 362-amino-acid chain; its full sequence is 3-dehydroquinate synthase (362 aa).

NAD(+) is bound by residues 70-75 (EGEQYK), 104-108 (GVIGD), 128-129 (TT), Lys-141, Lys-150, and 168-171 (TLTT). Residues Glu-183, His-246, and His-263 each contribute to the Zn(2+) site.

This sequence belongs to the sugar phosphate cyclases superfamily. Dehydroquinate synthase family. Requires Co(2+) as cofactor. Zn(2+) is required as a cofactor. It depends on NAD(+) as a cofactor.

Its subcellular location is the cytoplasm. It carries out the reaction 7-phospho-2-dehydro-3-deoxy-D-arabino-heptonate = 3-dehydroquinate + phosphate. It participates in metabolic intermediate biosynthesis; chorismate biosynthesis; chorismate from D-erythrose 4-phosphate and phosphoenolpyruvate: step 2/7. Its function is as follows. Catalyzes the conversion of 3-deoxy-D-arabino-heptulosonate 7-phosphate (DAHP) to dehydroquinate (DHQ). The protein is 3-dehydroquinate synthase of Histophilus somni (strain 2336) (Haemophilus somnus).